The sequence spans 865 residues: DNA mismatch repair protein MutS (865 aa).

609–616 is a binding site for ATP; sequence GPNMAGKS.

Belongs to the DNA mismatch repair MutS family.

Its function is as follows. This protein is involved in the repair of mismatches in DNA. It is possible that it carries out the mismatch recognition step. This protein has a weak ATPase activity. The protein is DNA mismatch repair protein MutS of Leuconostoc citreum (strain KM20).